Reading from the N-terminus, the 360-residue chain is G-protein coupled receptor 183 (360 aa).

Residues 1–30 are Extracellular-facing; that stretch reads MDIKMDNFTTPSAASLESDCDLYAHHHTAR. An N-linked (GlcNAc...) asparagine glycan is attached at N7. Residues 31-56 traverse the membrane as a helical segment; that stretch reads ILMPLHYSIVFIIGLVGNLLALIVII. Residues 57–76 are Cytoplasmic-facing; that stretch reads QNRKKINSTTLYSTNLVISD. The chain crosses the membrane as a helical span at residues 77–94; it reads ILFTTALPTRIAYYALGF. R86 contacts 7alpha,25-dihydroxycholesterol. The Extracellular segment spans residues 95 to 104; that stretch reads DWRIGDALCR. C103 and C180 are disulfide-bonded. A helical transmembrane segment spans residues 105-126; it reads ITALVFYINTYAGVNFMTCLSI. Residues Y111 and Y115 each contribute to the 7alpha,25-dihydroxycholesterol site. Residues 125–133 are interaction with G proteins; sequence SIDRFFAVV. Over 127–148 the chain is Cytoplasmic; sequence DRFFAVVHPLRYNKIKRIEHAK. A helical membrane pass occupies residues 149 to 167; sequence CICIFVWILVFGQTLPLLI. At 168–191 the chain is on the extracellular side; it reads NPMSKQEAERTTCMEYPNFEETKS. Residues 192-214 traverse the membrane as a helical segment; it reads LPWILLGACFIGYVLPLVIILIC. At 215–240 the chain is on the cytoplasmic side; sequence YSQICCKLFKTAKQNPLTEKSGVNKK. Residues 241-264 traverse the membrane as a helical segment; the sequence is ALNTIIFIIVVFVVCFTPYHVAII. 7alpha,25-dihydroxycholesterol is bound at residue Y259. The Extracellular portion of the chain corresponds to 265-286; sequence QHMIKKLRLPGLLECSQRHSFQ. A helical transmembrane segment spans residues 287–311; that stretch reads ISLHFTVCLMNFNCCMDPFIYFFAC. At 312-360 the chain is on the cytoplasmic side; sequence KGYKRKVMKMLKRQVSVSISSAVRSAPEENSREMTETQMMIHSKSLNGK. The residue at position 327 (S327) is a Phosphoserine. The disordered stretch occupies residues 339–360; the sequence is EENSREMTETQMMIHSKSLNGK. Polar residues predominate over residues 347 to 360; that stretch reads ETQMMIHSKSLNGK.

Belongs to the G-protein coupled receptor 1 family. In terms of assembly, homodimer and heterodimer. Heterodimerizes with CXCR5; leading to modulate the interaction between of CXCL13 and CXCR5.

It is found in the cell membrane. G-protein coupled receptor expressed in lymphocytes that acts as a chemotactic receptor for B-cells, T-cells, splenic dendritic cells, monocytes/macrophages and astrocytes. Receptor for oxysterol 7-alpha,25-dihydroxycholesterol (7-alpha,25-OHC) and other related oxysterols. Mediates cell positioning and movement of a number of cells by binding the 7-alpha,25-OHC ligand that forms a chemotactic gradient. Binding of 7-alpha,25-OHC mediates the correct localization of B-cells during humoral immune responses. Guides B-cell movement along the B-cell zone-T-cell zone boundary and later to interfollicular and outer follicular regions. Its specific expression during B-cell maturation helps position B-cells appropriately for mounting T-dependent antibody responses. Collaborates with CXCR5 to mediate B-cell migration; probably by forming a heterodimer with CXCR5 that affects the interaction between of CXCL13 and CXCR5. Also acts as a chemotactic receptor for some T-cells upon binding to 7-alpha,25-OHC ligand. Promotes follicular helper T (Tfh) cells differentiation by positioning activated T-cells at the follicle-T-zone interface, promoting contact of newly activated CD4 T-cells with activated dendritic cells and exposing them to Tfh-cell-promoting inducible costimulator (ICOS) ligand. Expression in splenic dendritic cells is required for their homeostasis, localization and ability to induce B- and T-cell responses: GPR183 acts as a chemotactic receptor in dendritic cells that mediates the accumulation of CD4(+) dendritic cells in bridging channels. Regulates migration of astrocytes and is involved in communication between astrocytes and macrophages. Promotes osteoclast precursor migration to bone surfaces. Signals constitutively through G(i)-alpha, but not G(s)-alpha or G(q)-alpha. Signals constitutively also via MAPK1/3 (ERK1/2). The chain is G-protein coupled receptor 183 (GPR183) from Bos taurus (Bovine).